A 319-amino-acid polypeptide reads, in one-letter code: ATP-dependent 6-phosphofructokinase (319 aa).

Gly-11 is an ATP binding site. 21–25 is an ADP binding site; it reads RAVVR. Residues 72 to 73 and 102 to 105 contribute to the ATP site; these read RC and GDGS. Position 103 (Asp-103) interacts with Mg(2+). Substrate is bound at residue 125–127; it reads TID. The Proton acceptor role is filled by Asp-127. ADP is bound at residue Arg-154. Residues Arg-162 and 169–171 each bind substrate; that span reads MGR. ADP contacts are provided by residues 185–187, Arg-211, and 213–215; these read GAE and KKH. Substrate contacts are provided by residues Glu-222, Arg-243, and 249 to 252; that span reads HVQR.

The protein belongs to the phosphofructokinase type A (PFKA) family. ATP-dependent PFK group I subfamily. Prokaryotic clade 'B1' sub-subfamily. As to quaternary structure, homotetramer. Mg(2+) serves as cofactor.

The protein localises to the cytoplasm. The enzyme catalyses beta-D-fructose 6-phosphate + ATP = beta-D-fructose 1,6-bisphosphate + ADP + H(+). Its pathway is carbohydrate degradation; glycolysis; D-glyceraldehyde 3-phosphate and glycerone phosphate from D-glucose: step 3/4. Allosterically activated by ADP and other diphosphonucleosides, and allosterically inhibited by phosphoenolpyruvate. Catalyzes the phosphorylation of D-fructose 6-phosphate to fructose 1,6-bisphosphate by ATP, the first committing step of glycolysis. This is ATP-dependent 6-phosphofructokinase from Geobacillus sp. (strain WCH70).